We begin with the raw amino-acid sequence, 406 residues long: Pyruvate dehydrogenase E1 component subunit beta-3, chloroplastic (406 aa).

Residues 1 to 70 constitute a chloroplast transit peptide; the sequence is MSAILQGAGA…PLIPNAVTTK (70 aa). Glu-142 is a binding site for thiamine diphosphate. Val-195, Ala-243, Ile-244, and Asn-248 together coordinate K(+).

As to quaternary structure, tetramer of 2 alpha and 2 beta subunits. Thiamine diphosphate is required as a cofactor.

It localises to the plastid. It is found in the chloroplast. The catalysed reaction is N(6)-[(R)-lipoyl]-L-lysyl-[protein] + pyruvate + H(+) = N(6)-[(R)-S(8)-acetyldihydrolipoyl]-L-lysyl-[protein] + CO2. Functionally, the pyruvate dehydrogenase complex catalyzes the overall conversion of pyruvate to acetyl-CoA and CO(2). It contains multiple copies of three enzymatic components: pyruvate dehydrogenase (E1), dihydrolipoamide acetyltransferase (E2) and lipoamide dehydrogenase (E3). This is Pyruvate dehydrogenase E1 component subunit beta-3, chloroplastic (E1-BETA-2) from Arabidopsis thaliana (Mouse-ear cress).